Here is a 155-residue protein sequence, read N- to C-terminus: Isotocin-neurophysin IT 1 (155 aa).

The first 19 residues, methionine 1–alanine 19, serve as a signal peptide directing secretion. The cysteines at positions 20 and 25 are disulfide-linked. Glycine 28 is modified (glycine amide). 7 disulfides stabilise this stretch: cysteine 41-cysteine 85, cysteine 44-cysteine 58, cysteine 52-cysteine 75, cysteine 59-cysteine 65, cysteine 92-cysteine 105, cysteine 99-cysteine 117, and cysteine 106-cysteine 111.

This sequence belongs to the vasopressin/oxytocin family. Post-translationally, seven disulfide bonds are present in neurophysin.

Its function is as follows. Isotocin causes contraction of smooth muscles. This is Isotocin-neurophysin IT 1 from Takifugu rubripes (Japanese pufferfish).